Here is a 743-residue protein sequence, read N- to C-terminus: Catalase-peroxidase (743 aa).

Positions 1–15 (MSSDSRPPQPDTSTQ) are enriched in polar residues. The disordered stretch occupies residues 1 to 40 (MSSDSRPPQPDTSTQSNSESESPAISSPTPQDHAPMTNRD). The segment covering 16 to 28 (SNSESESPAISSP) has biased composition (low complexity). A cross-link (tryptophyl-tyrosyl-methioninium (Trp-Tyr) (with M-259)) is located at residues 110–233 (WHAAGTYRIQ…YGATTMGLIY (124 aa)). His111 acts as the Proton acceptor in catalysis. Residues 233 to 259 (YVNPEGPEGKPDPVAAAHDIRETFARM) constitute a cross-link (tryptophyl-tyrosyl-methioninium (Tyr-Met) (with W-110)). Residue His274 participates in heme b binding. The interval 490–511 (DKRGGANGGRLRLEPQKSWESN) is disordered.

The protein belongs to the peroxidase family. Peroxidase/catalase subfamily. As to quaternary structure, homodimer or homotetramer. Heme b is required as a cofactor. Formation of the three residue Trp-Tyr-Met cross-link is important for the catalase, but not the peroxidase activity of the enzyme.

It catalyses the reaction H2O2 + AH2 = A + 2 H2O. The enzyme catalyses 2 H2O2 = O2 + 2 H2O. In terms of biological role, bifunctional enzyme with both catalase and broad-spectrum peroxidase activity. The chain is Catalase-peroxidase from Mycobacterium marinum (strain ATCC BAA-535 / M).